We begin with the raw amino-acid sequence, 396 residues long: Elongation factor Tu (396 aa).

The region spanning 10-205 is the tr-type G domain; the sequence is KPHVNIGTIG…ACDDNIPDPV (196 aa). The segment at 19 to 26 is G1; sequence GHVDHGKT. GTP is bound at residue 19–26; the sequence is GHVDHGKT. Thr-26 lines the Mg(2+) pocket. The segment at 62–66 is G2; that stretch reads GITIN. Positions 83–86 are G3; that stretch reads DAPG. GTP contacts are provided by residues 83–87 and 138–141; these read DAPGH and NKCD. The interval 138 to 141 is G4; sequence NKCD. Residues 175–177 form a G5 region; that stretch reads SAL.

It belongs to the TRAFAC class translation factor GTPase superfamily. Classic translation factor GTPase family. EF-Tu/EF-1A subfamily. In terms of assembly, monomer.

The protein localises to the cytoplasm. It catalyses the reaction GTP + H2O = GDP + phosphate + H(+). Its function is as follows. GTP hydrolase that promotes the GTP-dependent binding of aminoacyl-tRNA to the A-site of ribosomes during protein biosynthesis. In Corynebacterium glutamicum (strain ATCC 13032 / DSM 20300 / JCM 1318 / BCRC 11384 / CCUG 27702 / LMG 3730 / NBRC 12168 / NCIMB 10025 / NRRL B-2784 / 534), this protein is Elongation factor Tu.